A 458-amino-acid polypeptide reads, in one-letter code: D-inositol 3-phosphate glycosyltransferase (458 aa).

The segment at 1–29 (MRADRPGHRSRGINPGPGMFTLVGPDERD) is disordered. Residue histidine 47 participates in 1D-myo-inositol 3-phosphate binding. UDP-N-acetyl-alpha-D-glucosamine-binding positions include 53–54 (QP) and glycine 61. 1D-myo-inositol 3-phosphate is bound by residues 58-63 (DAGGMN), lysine 116, tyrosine 149, threonine 173, and arginine 193. UDP-N-acetyl-alpha-D-glucosamine is bound by residues arginine 267, lysine 272, and valine 339. Residue alanine 351 participates in Mg(2+) binding. UDP-N-acetyl-alpha-D-glucosamine-binding residues include glutamate 361 and glutamate 369. A Mg(2+)-binding site is contributed by threonine 375.

This sequence belongs to the glycosyltransferase group 1 family. MshA subfamily. Homodimer.

It catalyses the reaction 1D-myo-inositol 3-phosphate + UDP-N-acetyl-alpha-D-glucosamine = 1D-myo-inositol 2-acetamido-2-deoxy-alpha-D-glucopyranoside 3-phosphate + UDP + H(+). Its function is as follows. Catalyzes the transfer of a N-acetyl-glucosamine moiety to 1D-myo-inositol 3-phosphate to produce 1D-myo-inositol 2-acetamido-2-deoxy-glucopyranoside 3-phosphate in the mycothiol biosynthesis pathway. This is D-inositol 3-phosphate glycosyltransferase from Nocardioides sp. (strain ATCC BAA-499 / JS614).